Consider the following 360-residue polypeptide: Protein pelota homolog (360 aa).

It belongs to the eukaryotic release factor 1 family. Pelota subfamily. In terms of assembly, monomer. The cofactor is a divalent metal cation.

Its subcellular location is the cytoplasm. May function in recognizing stalled ribosomes, interact with stem-loop structures in stalled mRNA molecules, and effect endonucleolytic cleavage of the mRNA. May play a role in the release non-functional ribosomes and degradation of damaged mRNAs. Has endoribonuclease activity. The polypeptide is Protein pelota homolog (Hyperthermus butylicus (strain DSM 5456 / JCM 9403 / PLM1-5)).